The sequence spans 342 residues: Isopentenyl-diphosphate delta-isomerase (342 aa).

11 to 12 (RK) lines the substrate pocket. Residues Ser-68, 69-71 (SMT), Ser-99, and Asn-127 each bind FMN. 99–101 (SMR) is a binding site for substrate. Residue Gln-162 coordinates substrate. Glu-163 lines the Mg(2+) pocket. FMN contacts are provided by residues Lys-194, Thr-224, 274 to 276 (GLK), and 295 to 296 (AG).

It belongs to the IPP isomerase type 2 family. As to quaternary structure, homooctamer. Dimer of tetramers. The cofactor is FMN. Requires NADPH as cofactor. Mg(2+) is required as a cofactor.

It is found in the cytoplasm. It catalyses the reaction isopentenyl diphosphate = dimethylallyl diphosphate. Its function is as follows. Involved in the biosynthesis of isoprenoids. Catalyzes the 1,3-allylic rearrangement of the homoallylic substrate isopentenyl (IPP) to its allylic isomer, dimethylallyl diphosphate (DMAPP). The chain is Isopentenyl-diphosphate delta-isomerase from Rickettsia akari (strain Hartford).